The following is a 580-amino-acid chain: MGTTGLESLSLGDRGAAPTVTSSERLVPDPPNDLRKEDVAMELERVGEDEEQMMIKRSSECNPLLQEPIASAQFGATAGTECRKSVPCGWERVVKQRLFGKTAGRFDVYFISPQGLKFRSKSSLANYLHKNGETSLKPEDFDFTVLSKRGIKSRYKDCSMAALTSHLQNQSNNSNWNLRTRSKCKKDVFMPPSSSSELQESRGLSNFTSTHLLLKEDEGVDDVNFRKVRKPKGKVTILKGIPIKKTKKGCRKSCSGFVQSDSKRESVCNKADAESEPVAQKSQLDRTVCISDAGACGETLSVTSEENSLVKKKERSLSSGSNFCSEQKTSGIINKFCSAKDSEHNEKYEDTFLESEEIGTKVEVVERKEHLHTDILKRGSEMDNNCSPTRKDFTGEKIFQEDTIPRTQIERRKTSLYFSSKYNKEALSPPRRKAFKKWTPPRSPFNLVQETLFHDPWKLLIATIFLNRTSGKMAIPVLWKFLEKYPSAEVARTADWRDVSELLKPLGLYDLRAKTIVKFSDEYLTKQWKYPIELHGIGKYGNDSYRIFCVNEWKQVHPEDHKLNKYHDWLWENHEKLSLS.

Positions 1–36 (MGTTGLESLSLGDRGAAPTVTSSERLVPDPPNDLRK) are disordered. An MBD domain is found at 76 to 148 (ATAGTECRKS…EDFDFTVLSK (73 aa)). 2 positions are modified to phosphoserine: Ser-318 and Ser-428. The active site involves Asp-560.

Interacts with MLH1.

The protein resides in the nucleus. Mismatch-specific DNA N-glycosylase involved in DNA repair. Has thymine glycosylase activity and is specific for G:T mismatches within methylated and unmethylated CpG sites. Can also remove uracil or 5-fluorouracil in G:U mismatches. Has no lyase activity. Was first identified as methyl-CpG-binding protein. The protein is Methyl-CpG-binding domain protein 4 of Homo sapiens (Human).